The primary structure comprises 187 residues: BLOC-1-related complex subunit 8 homolog (187 aa).

The disordered stretch occupies residues 165-187; sequence QSQHETANDTRQGYNDDANNDQD.

The protein belongs to the BORCS8 family.

It localises to the lysosome membrane. Functionally, may participate in the coupling of lysosomes to microtubule plus-end-directed kinesin motor. In Nematostella vectensis (Starlet sea anemone), this protein is BLOC-1-related complex subunit 8 homolog.